We begin with the raw amino-acid sequence, 833 residues long: Serine-rich coiled-coil domain-containing protein 2 (833 aa).

Residues Asn178 to Asn208 are disordered. A compositionally biased stretch (polar residues) spans Ser191 to Asn208. Ser222 bears the Phosphoserine mark. Disordered regions lie at residues Leu321–Met345, Asn424–Pro452, Lys478–Gly508, and Asp602–Leu631. Ser451 is subject to Phosphoserine. The segment covering Ser496 to Ser506 has biased composition (low complexity). The span at Leu606 to His615 shows a compositional bias: basic residues. Residues Asp711–Arg747 are a coiled coil. The tract at residues Phe789–Gln833 is disordered. A compositionally biased stretch (polar residues) spans Thr803–Gln814.

It belongs to the CCSER family. In terms of tissue distribution, expressed in brain (at protein level).

The protein resides in the cytoplasm. Its subcellular location is the cytoskeleton. Functionally, microtubule-binding protein which might play a role in microtubule bundling. This Mus musculus (Mouse) protein is Serine-rich coiled-coil domain-containing protein 2 (Ccser2).